Reading from the N-terminus, the 181-residue chain is Acireductone dioxygenase (181 aa).

Fe(2+)-binding residues include H97, H99, E103, and H141. Residues H97, H99, E103, and H141 each coordinate Ni(2+).

This sequence belongs to the acireductone dioxygenase (ARD) family. As to quaternary structure, monomer. Requires Fe(2+) as cofactor. The cofactor is Ni(2+).

The enzyme catalyses 1,2-dihydroxy-5-(methylsulfanyl)pent-1-en-3-one + O2 = 3-(methylsulfanyl)propanoate + CO + formate + 2 H(+). It catalyses the reaction 1,2-dihydroxy-5-(methylsulfanyl)pent-1-en-3-one + O2 = 4-methylsulfanyl-2-oxobutanoate + formate + 2 H(+). It participates in amino-acid biosynthesis; L-methionine biosynthesis via salvage pathway; L-methionine from S-methyl-5-thio-alpha-D-ribose 1-phosphate: step 5/6. Catalyzes 2 different reactions between oxygen and the acireductone 1,2-dihydroxy-3-keto-5-methylthiopentene (DHK-MTPene) depending upon the metal bound in the active site. Fe-containing acireductone dioxygenase (Fe-ARD) produces formate and 2-keto-4-methylthiobutyrate (KMTB), the alpha-ketoacid precursor of methionine in the methionine recycle pathway. Ni-containing acireductone dioxygenase (Ni-ARD) produces methylthiopropionate, carbon monoxide and formate, and does not lie on the methionine recycle pathway. The chain is Acireductone dioxygenase from Pseudomonas aeruginosa (strain UCBPP-PA14).